The primary structure comprises 177 residues: Large ribosomal subunit protein uL6 (177 aa).

It belongs to the universal ribosomal protein uL6 family. In terms of assembly, part of the 50S ribosomal subunit.

Functionally, this protein binds to the 23S rRNA, and is important in its secondary structure. It is located near the subunit interface in the base of the L7/L12 stalk, and near the tRNA binding site of the peptidyltransferase center. The sequence is that of Large ribosomal subunit protein uL6 from Polaromonas naphthalenivorans (strain CJ2).